A 468-amino-acid chain; its full sequence is Cysteine--tRNA ligase (468 aa).

Cys-28 contributes to the Zn(2+) binding site. The 'HIGH' region signature appears at Pro-30–Asn-40. Cys-212, His-237, and Glu-241 together coordinate Zn(2+). The 'KMSKS' region motif lies at Lys-271–Ser-275. Lys-274 contacts ATP.

It belongs to the class-I aminoacyl-tRNA synthetase family. As to quaternary structure, monomer. Zn(2+) is required as a cofactor.

The protein resides in the cytoplasm. The catalysed reaction is tRNA(Cys) + L-cysteine + ATP = L-cysteinyl-tRNA(Cys) + AMP + diphosphate. This is Cysteine--tRNA ligase from Lacticaseibacillus casei (strain BL23) (Lactobacillus casei).